The chain runs to 124 residues: MSAVAENTTTEMPAPILFTDSAAAKVAELIAEEGNPDLKLRVFVQGGGCSGFQYGFTFDEITNEDDTTMTKNGVSLLIDAMSYQYLVGAEIDYKEDLQGAQFVIKNPNAASTCGCGSSFSVEDH.

Residues C49, C113, and C115 each contribute to the iron-sulfur cluster site.

This sequence belongs to the HesB/IscA family. As to quaternary structure, homodimer. Iron-sulfur cluster is required as a cofactor.

Functionally, required for insertion of 4Fe-4S clusters. This chain is Putative iron-sulfur cluster insertion protein ErpA, found in Acidovorax sp. (strain JS42).